We begin with the raw amino-acid sequence, 348 residues long: Dihydroorotase (348 aa).

His14 and His16 together coordinate Zn(2+). Substrate contacts are provided by residues 16–18 (HLR) and Asn42. Lys100, His137, and His175 together coordinate Zn(2+). At Lys100 the chain carries N6-carboxylysine. His137 contributes to the substrate binding site. Leu220 serves as a coordination point for substrate. Asp248 lines the Zn(2+) pocket. Asp248 is an active-site residue. The substrate site is built by His252 and Ala264.

It belongs to the metallo-dependent hydrolases superfamily. DHOase family. Class II DHOase subfamily. As to quaternary structure, homodimer. Requires Zn(2+) as cofactor.

It catalyses the reaction (S)-dihydroorotate + H2O = N-carbamoyl-L-aspartate + H(+). The protein operates within pyrimidine metabolism; UMP biosynthesis via de novo pathway; (S)-dihydroorotate from bicarbonate: step 3/3. Its function is as follows. Catalyzes the reversible cyclization of carbamoyl aspartate to dihydroorotate. This Pseudomonas entomophila (strain L48) protein is Dihydroorotase.